The chain runs to 185 residues: Ubiquitin-fold modifier-conjugating enzyme 1 (185 aa).

The active-site Glycyl thioester intermediate is the Cys119.

It belongs to the ubiquitin-conjugating enzyme family. UFC1 subfamily.

E2-like enzyme which forms an intermediate with UFM1 via a thioester linkage. In Oryza sativa subsp. japonica (Rice), this protein is Ubiquitin-fold modifier-conjugating enzyme 1.